A 725-amino-acid chain; its full sequence is Methionine--tRNA ligase (725 aa).

A 'HIGH' region motif is present at residues 27 to 37 (PYANGQIHIGH). Residues C158, C161, C171, and C174 each contribute to the Zn(2+) site. A 'KMSKS' region motif is present at residues 348–352 (KMSKS). K351 lines the ATP pocket. In terms of domain architecture, tRNA-binding spans 619–725 (DFAKIDLRIA…SGAKPGMRVK (107 aa)).

This sequence belongs to the class-I aminoacyl-tRNA synthetase family. MetG type 1 subfamily. As to quaternary structure, homodimer. Zn(2+) serves as cofactor.

It localises to the cytoplasm. The enzyme catalyses tRNA(Met) + L-methionine + ATP = L-methionyl-tRNA(Met) + AMP + diphosphate. Is required not only for elongation of protein synthesis but also for the initiation of all mRNA translation through initiator tRNA(fMet) aminoacylation. This chain is Methionine--tRNA ligase, found in Burkholderia mallei (strain NCTC 10247).